A 111-amino-acid chain; its full sequence is Small ribosomal subunit protein uS10 (111 aa).

The protein belongs to the universal ribosomal protein uS10 family. As to quaternary structure, part of the 30S ribosomal subunit.

Its function is as follows. Involved in the binding of tRNA to the ribosomes. The protein is Small ribosomal subunit protein uS10 of Ehrlichia ruminantium (strain Welgevonden).